The primary structure comprises 273 residues: MSPKGDGLGTVDGLHSQVLQEQVSTGDNLHECDSQGPSKDTLVREGKTYKCKECGKVFNKNSLLVRHHQIHAGVKTYECQECGKAFHEKVDFVRHMRIHSGEKPCKCVECGKVFNRRSHLLCYRQIHTGEKPYECSECGKTFSYHSVFIQHRMTHTGEKLFGCKECGKTFYYNSSLTRHMKIHTGEKPYKCGECGKTFTYHSVFFRHSMTHTAGKPYECKECGKGFYYSYSLTRHTRSHTGEKPYECLEHRKAFGYHSAFAQQSKIHSGGKNL.

C2H2-type zinc fingers lie at residues 49–71 (YKCKECGKVFNKNSLLVRHHQIH) and 77–99 (YECQECGKAFHEKVDFVRHMRIH). The C2H2-type 3; atypical zinc-finger motif lies at 105 to 127 (CKCVECGKVFNRRSHLLCYRQIH). 4 consecutive C2H2-type zinc fingers follow at residues 133-155 (YECSECGKTFSYHSVFIQHRMTH), 161-183 (FGCKECGKTFYYNSSLTRHMKIH), 189-211 (YKCGECGKTFTYHSVFFRHSMTH), and 217-239 (YECKECGKGFYYSYSLTRHTRSH).

The protein belongs to the krueppel C2H2-type zinc-finger protein family.

It localises to the nucleus. Its function is as follows. May be involved in transcriptional regulation. This is Zinc finger protein 80 (ZNF80) from Gorilla gorilla gorilla (Western lowland gorilla).